Here is a 782-residue protein sequence, read N- to C-terminus: Acetazolamide conferring resistance protein zam (782 aa).

Residues 270–579 enclose the RNB domain; it reads EVALSLESQA…QRLLKLVLTE (310 aa). The 82-residue stretch at 655–736 folds into the S1 motif domain; sequence GEIFRGLITG…YRQQIDLGAV (82 aa). Residues 737 to 782 form a disordered region; the sequence is NNAPKDSANMDFDDDDEDGDEREEQDTMDWDAMEDGDDDEGGAVIF. The segment covering 747–782 has biased composition (acidic residues); that stretch reads DFDDDDEDGDEREEQDTMDWDAMEDGDDDEGGAVIF.

It belongs to the RNR ribonuclease family.

Not known; control resistance to the carbonic anhydrase inhibitor acetazolamide. This Synechocystis sp. (strain ATCC 27184 / PCC 6803 / Kazusa) protein is Acetazolamide conferring resistance protein zam (zam).